The primary structure comprises 87 residues: Large ribosomal subunit protein eL34 (87 aa).

Belongs to the eukaryotic ribosomal protein eL34 family.

The polypeptide is Large ribosomal subunit protein eL34 (Sulfurisphaera tokodaii (strain DSM 16993 / JCM 10545 / NBRC 100140 / 7) (Sulfolobus tokodaii)).